A 167-amino-acid chain; its full sequence is Disulfide bond formation protein B (167 aa).

Over 1-12 (MFLNLLDAPRRL) the chain is Cytoplasmic. Residues 13–29 (LALVALGCVALLAFGLY) form a helical membrane-spanning segment. At 30–47 (LQHVVGLEPCPMCIVQRY) the chain is on the periplasmic side. C39 and C42 form a disulfide bridge. Residues 48–63 (ALVLVAIVAGLTAITS) traverse the membrane as a helical segment. Residues 64–69 (NKKGLI) lie on the Cytoplasmic side of the membrane. The helical transmembrane segment at 70–87 (TGSGVLLLLAGFGAFVAA) threads the bilayer. Over 88–143 (RQSFLQWYPPEVASCGRDFYGMIETFPLQRAIPMIFKGSGDCAKVDWTFLGGSIAN) the chain is Periplasmic. C102 and C129 are oxidised to a cystine. The chain crosses the membrane as a helical span at residues 144-162 (WSFVCFAVIGLTALTLIAR). The Cytoplasmic portion of the chain corresponds to 163 to 167 (LARQR).

This sequence belongs to the DsbB family.

The protein localises to the cell inner membrane. Its function is as follows. Required for disulfide bond formation in some periplasmic proteins. Acts by oxidizing the DsbA protein. The chain is Disulfide bond formation protein B from Polaromonas naphthalenivorans (strain CJ2).